Consider the following 758-residue polypeptide: MSDTQDNAPASAQGVDQKAAAGCPVAHDSVTAHGSESESPAIDSPTPHSGGRPRTNRDWWPNQLDLSVLSTNSAKVNPLGEDFAYAKEFAKLDVEALKRDIVEVLTTSQDWWPADFGHYGGLMIRLSWHAAGTYRIDDGRGGAGDGGQRFAPLNSWPDNVNLDKARRLLWPVKQKYGQKISWADLLVLAGNVALESMGFKTFGFGFGREDVWEPEEIFWGSEDTWVGDERYVSEKEFVAGVGATEMGLIYVNPEGPRGNADPAAAAHFIRETFRRMAMDDEETVALIAGGHTFGKTHGAGIADDHVGPEPEAAPLEAQGLGWMSSYASGAGADAISSGLEVTWTDRPTQWSNRFFEILFAYEWELTTSPGGAKQWVAKDAEAIIPDAYDAAKKHKPTMLTTDLSLRVDPAYERISRRFLENPDEFALAFAKAWYKLLHRDMGPVSRFLGPWVPEPQLWQDPVPAVDHALVGDADIAALKAKVLQSGLTTAQLVSTAWASAASFRHTDRRGGANGARVRLEPQRGWEVNQPEQLATVLTTLEGIQREFNAAGGTKISLADLIVLAGSAAVEKAARDAGFEVTVPFHPGRTDATQEQTDVESFQVLEPRADGFRNYLRPGEKAQPEVLLVDRAYMLNLTAPEMTVLIGGLRALEANVGGSRHGVLTDRPGVLTNDFFTNLLALGTRWKASESTEHVYEIRDLATDTVKWTASAVDLIFGSNSQLRALAEVYASEDAREKFVTDFVAAWTKVMELDRFDLA.

Positions 1–10 are enriched in polar residues; it reads MSDTQDNAPA. A disordered region spans residues 1-59; it reads MSDTQDNAPASAQGVDQKAAAGCPVAHDSVTAHGSESESPAIDSPTPHSGGRPRTNRDW. Residues 128-250 constitute a cross-link (tryptophyl-tyrosyl-methioninium (Trp-Tyr) (with M-276)); sequence WHAAGTYRID…VGATEMGLIY (123 aa). Residue H129 is the Proton acceptor of the active site. Residues 250 to 276 constitute a cross-link (tryptophyl-tyrosyl-methioninium (Tyr-Met) (with W-128)); the sequence is YVNPEGPRGNADPAAAAHFIRETFRRM. Residue H291 participates in heme b binding.

Belongs to the peroxidase family. Peroxidase/catalase subfamily. As to quaternary structure, homodimer or homotetramer. It depends on heme b as a cofactor. Post-translationally, formation of the three residue Trp-Tyr-Met cross-link is important for the catalase, but not the peroxidase activity of the enzyme.

It carries out the reaction H2O2 + AH2 = A + 2 H2O. The catalysed reaction is 2 H2O2 = O2 + 2 H2O. In terms of biological role, bifunctional enzyme with both catalase and broad-spectrum peroxidase activity. The polypeptide is Catalase-peroxidase (Salinispora arenicola (strain CNS-205)).